The primary structure comprises 531 residues: Serine-type carboxypeptidase F (531 aa).

An N-terminal signal peptide occupies residues 1 to 25 (MLFRSLLSTAVLAVSLCTDNASAAK). Asn-20 carries an N-linked (GlcNAc...) asparagine glycan. Positions 26–52 (HGRFGQKARDAMNIAKRSANAVKHSLK) are excised as a propeptide. N-linked (GlcNAc...) asparagine glycans are attached at residues Asn-63, Asn-94, and Asn-155. Ser-211 is an active-site residue. 4 N-linked (GlcNAc...) asparagine glycosylation sites follow: Asn-228, Asn-271, Asn-309, and Asn-378. Residue Asp-430 is part of the active site. Asn-436 and Asn-444 each carry an N-linked (GlcNAc...) asparagine glycan. His-507 is a catalytic residue.

The protein belongs to the peptidase S10 family. Monomer.

With respect to regulation, inhibited by DFP, and Hg(Cl)2. Its function is as follows. Removes any amino acid from the C-terminus of a long peptide. Digests preferentially peptides containing a positively charged residue in P1' position, as well as arginine, lysine or phenylalanine in P1 position of ester substrate. Also catalyzes peptide synthesis. This chain is Serine-type carboxypeptidase F (pepF), found in Aspergillus niger.